The primary structure comprises 312 residues: Putative ring-cleaving dioxygenase MhqO (312 aa).

2 consecutive VOC domains span residues 7 to 131 (GIHH…IVER) and 152 to 269 (GFGG…IATD). Residues histidine 10, histidine 217, and glutamate 265 each contribute to the Fe cation site.

It belongs to the extradiol ring-cleavage dioxygenase family. It depends on Fe(2+) as a cofactor.

The protein resides in the cytoplasm. Functionally, putative ring-cleavage dioxygenase that may contribute to the degradation of aromatic compounds. The polypeptide is Putative ring-cleaving dioxygenase MhqO (mhqO) (Bacillus subtilis (strain 168)).